Consider the following 66-residue polypeptide: Conotoxin TsMEKL-03 (66 aa).

The N-terminal stretch at 1-9 (VILLMSTQA) is a signal peptide. The propeptide occupies 10–38 (LIQSGVEKRSNKIKALSKRKTTAESWWEG). 3 cysteine pairs are disulfide-bonded: Cys40-Cys54, Cys47-Cys58, and Cys53-Cys63.

Belongs to the conotoxin O2 superfamily. In terms of tissue distribution, expressed by the venom duct.

Its subcellular location is the secreted. In Conus tessulatus (Tessellate cone), this protein is Conotoxin TsMEKL-03.